We begin with the raw amino-acid sequence, 732 residues long: Iron-sulfur clusters transporter ATM1, mitochondrial (732 aa).

The transit peptide at 1–55 (MGFGSCSRHALFTPAAFSGSFTTMTTSCFKRVYTAQIHGGDALGKRLPSVSSFSG) directs the protein to the mitochondrion. At 56–143 (QLPRHGLHRQ…KNNPNVKFRV (88 aa)) the chain is on the mitochondrial matrix side. The disordered stretch occupies residues 71-114 (STSHRRQTSPPPSPRTTSQSPTVPSKASTTPPTSLNTSKPIATE). Over residues 85-95 (RTTSQSPTVPS) the composition is skewed to low complexity. Residues 96–114 (KASTTPPTSLNTSKPIATE) are compositionally biased toward polar residues. Residues 144–164 (IGALTLLVAGKVLNVQVPFFF) traverse the membrane as a helical segment. Residues 144–432 (IGALTLLVAG…LGTVYRELRQ (289 aa)) form the ABC transmembrane type-1 domain. Residues 165-181 (KTIVDSLNVPITESTTV) lie on the Mitochondrial intermembrane side of the membrane. A helical transmembrane segment spans residues 182-202 (WVLAGASIAGYGAARILTTLF). Residues 203-262 (GELRNAVFASVAQNAIRKVARETFEHLLNMDMKFHLERQTGGLTRAIDRGTKGISFILSS) are Mitochondrial matrix-facing. A helical membrane pass occupies residues 263-283 (IVFHVIPTALEISMVCGILSW). A topological domain (mitochondrial intermembrane) is located at residue Lys284. Residues 285-305 (FGWDFAAVTAITMLLYTWFTI) form a helical membrane-spanning segment. Over 306 to 378 (KTTAWRTTFR…SLAALNSGQN (73 aa)) the chain is Mitochondrial matrix. Residues 311 to 315 (RTTFR) and 374 to 377 (NSGQ) contribute to the glutathione site. The chain crosses the membrane as a helical span at residues 379–399 (FIFSSALTMMMLLGAQGIVKG). Residues 400 to 405 (TMTVGD) lie on the Mitochondrial intermembrane side of the membrane. The chain crosses the membrane as a helical span at residues 406-426 (LVLVNQLVFQLSLPLNFLGTV). Gly424 contacts glutathione. Residues 427 to 732 (YRELRQSLID…LEVVDEKKKQ (306 aa)) lie on the Mitochondrial matrix side of the membrane. One can recognise an ABC transporter domain in the interval 466–702 (IEFRNVAFAY…PGGVYHRLWQ (237 aa)). ATP is bound by residues Tyr475 and 499-506 (GPSGCGKS). Residues 708-732 (STQPTDEEIERQREELEVVDEKKKQ) form a disordered region. Residues 717 to 732 (ERQREELEVVDEKKKQ) are compositionally biased toward basic and acidic residues.

Belongs to the ABC transporter superfamily. ABCB family. Heavy Metal importer (TC 3.A.1.210) subfamily. As to quaternary structure, homodimer.

The protein localises to the mitochondrion inner membrane. Functionally, performs an essential function in the generation of cytoplasmic iron-sulfur proteins by mediating the ATP-dependent export of mitochondrial Fe/S cluster precursors synthesized by NFS1 and other mitochondrial proteins. Hydrolyzes ATP. Binds glutathione and may function by transporting a glutathione-conjugated iron-sulfur compound. Plays a role during copper stress, in a manner dependent on the copper metalloregulatory transcription factor CUF1. This chain is Iron-sulfur clusters transporter ATM1, mitochondrial, found in Cryptococcus neoformans var. grubii serotype A (strain H99 / ATCC 208821 / CBS 10515 / FGSC 9487) (Filobasidiella neoformans var. grubii).